Here is an 895-residue protein sequence, read N- to C-terminus: Catenin alpha-3 (895 aa).

Residues 74-107 are a coiled coil; the sequence is EMIAKEATVLKEELAAALQEVRKESKALKVSAER. A Phosphoserine modification is found at Ser-160. The stretch at 325 to 379 forms a coiled coil; that stretch reads RERIIAECNAIRQALQDLLTEYMSNTGKTERSNTLNTAIVNMSKKTRDLRRQLRK. Thr-361 carries the phosphothreonine modification. The disordered stretch occupies residues 635–660; that stretch reads DVSDLEDDHEVRSHTSIQTEGKTDRA. Phosphoserine occurs at positions 637 and 647. Thr-649 is subject to Phosphothreonine.

The protein belongs to the vinculin/alpha-catenin family. Interacts with CTNNB1. Interacts with PKP2. Expressed in heart (at protein level).

The protein localises to the cytoplasm. Its subcellular location is the cytoskeleton. It is found in the cell junction. The protein resides in the desmosome. Functionally, may be involved in formation of stretch-resistant cell-cell adhesion complexes. This chain is Catenin alpha-3, found in Mus musculus (Mouse).